Reading from the N-terminus, the 199-residue chain is Putative acetyltransferase SAV2555 (199 aa).

This sequence belongs to the transferase hexapeptide repeat family.

This is Putative acetyltransferase SAV2555 from Staphylococcus aureus (strain Mu50 / ATCC 700699).